We begin with the raw amino-acid sequence, 6061 residues long: Intermembrane lipid transfer protein vps13B (6061 aa).

The Chorein N-terminal domain occupies 2 to 115; sequence FESLVADIIA…QLELKRKKLE (114 aa). Disordered regions lie at residues 590-623, 803-828, 1386-1414, 1604-1644, 2747-2784, 2950-2972, 3364-3401, 3855-3876, 4011-4068, 4107-4132, 4262-4297, 4321-4442, 4601-4631, 4753-4797, 4861-4882, 5003-5030, and 5372-5429; these read PKYK…NNNK, DIKN…NNKN, QQQQ…NVSS, SSNN…GTLS, QTNQ…EDQE, GLNN…NSST, LNRN…DDDD, QQQQ…RNKK, QQQQ…FKNN, ELEK…RPDE, NSSN…YNGR, SQSI…TSPG, TSSP…KKSL, NNNN…TQEF, NAGG…SISQ, LATK…DGIE, and NINN…IGQD. A compositionally biased stretch (basic and acidic residues) spans 595 to 614; the sequence is HQENKENKENQENQENENKN. Positions 1395-1406 are enriched in basic and acidic residues; that stretch reads QQQKEEEQHGGE. Residues 2747 to 2756 are compositionally biased toward polar residues; it reads QTNQNNQKNR. The segment covering 2774-2784 has biased composition (acidic residues); the sequence is NDNDEYDEDQE. Acidic residues predominate over residues 3388–3401; it reads IDDDDGDGDDDDDD. Over residues 4015 to 4024 the composition is skewed to basic and acidic residues; that stretch reads QEKEKEIEKE. A compositionally biased stretch (low complexity) spans 4031–4040; it reads LKNNNNISIN. Residues 4041–4057 are compositionally biased toward acidic residues; it reads DNDDDDDDDDNDNDENN. Residues 4058-4068 show a composition bias toward low complexity; that stretch reads NENYEFNFKNN. A compositionally biased stretch (basic and acidic residues) spans 4107 to 4120; that stretch reads ELEKKKRERKENSK. 2 stretches are compositionally biased toward low complexity: residues 4330–4383 and 4399–4429; these read TTTT…VGSN and NNNN…NNNN. Residues 4430 to 4441 are compositionally biased toward polar residues; sequence SNDNQVNFSTSP. 2 stretches are compositionally biased toward low complexity: residues 4601–4617 and 4753–4784; these read TSSP…NYNN and NNNN…SNEN. A compositionally biased stretch (polar residues) spans 4785–4794; it reads SQDQPPSIKT. Low complexity-rich tracts occupy residues 5013–5030 and 5372–5384; these read DNSN…DGIE and NINN…NNDN. Residues 5385–5409 show a composition bias toward basic and acidic residues; it reads NKNKNNNDKNKNNDKNNKNNNDKNN. Residues 5410–5421 are compositionally biased toward low complexity; the sequence is NDNNNNNNNNNN.

The protein belongs to the VPS13 family.

It localises to the membrane. Mediates the transfer of lipids between membranes at organelle contact sites. The polypeptide is Intermembrane lipid transfer protein vps13B (vps13B) (Dictyostelium discoideum (Social amoeba)).